The sequence spans 278 residues: HTH-type transcriptional activator RhaS (278 aa).

An HTH araC/xylS-type domain is found at 174–272 (NLLLAWLEDH…NWSPRDIRQG (99 aa)). DNA-binding regions (H-T-H motif) lie at residues 191–212 (DAVA…KQQT) and 239–262 (VTDI…RREF).

Binds DNA as a dimer.

It localises to the cytoplasm. Functionally, activates expression of the rhaBAD and rhaT operons. This Escherichia coli O127:H6 (strain E2348/69 / EPEC) protein is HTH-type transcriptional activator RhaS.